The sequence spans 87 residues: uncharacterized protein (87 aa).

The protein to A.fulgidus AF_1348 and AF_1363.

This is an uncharacterized protein from Archaeoglobus fulgidus (strain ATCC 49558 / DSM 4304 / JCM 9628 / NBRC 100126 / VC-16).